The chain runs to 1141 residues: DNA polymerase II large subunit (1141 aa).

The interval 567–587 (AGTRVGGRMGRPGKSAPRKMK) is disordered.

It belongs to the archaeal DNA polymerase II family. Heterodimer of a large subunit and a small subunit.

It catalyses the reaction DNA(n) + a 2'-deoxyribonucleoside 5'-triphosphate = DNA(n+1) + diphosphate. The enzyme catalyses Exonucleolytic cleavage in the 3'- to 5'-direction to yield nucleoside 5'-phosphates.. In terms of biological role, possesses two activities: a DNA synthesis (polymerase) and an exonucleolytic activity that degrades single-stranded DNA in the 3'- to 5'-direction. Has a template-primer preference which is characteristic of a replicative DNA polymerase. The protein is DNA polymerase II large subunit of Methanocorpusculum labreanum (strain ATCC 43576 / DSM 4855 / Z).